Here is a 332-residue protein sequence, read N- to C-terminus: Tryptophan--tRNA ligase (332 aa).

ATP is bound by residues 11 to 13 (QPS) and 19 to 20 (GN). Residues 12-20 (PSGELTIGN) carry the 'HIGH' region motif. D135 provides a ligand contact to L-tryptophan. ATP is bound by residues 147-149 (GQD), V186, and 195-199 (KMSKS). The 'KMSKS' region motif lies at 195–199 (KMSKS).

Belongs to the class-I aminoacyl-tRNA synthetase family. In terms of assembly, homodimer.

It is found in the cytoplasm. It carries out the reaction tRNA(Trp) + L-tryptophan + ATP = L-tryptophyl-tRNA(Trp) + AMP + diphosphate + H(+). Functionally, catalyzes the attachment of tryptophan to tRNA(Trp). The sequence is that of Tryptophan--tRNA ligase from Shewanella oneidensis (strain ATCC 700550 / JCM 31522 / CIP 106686 / LMG 19005 / NCIMB 14063 / MR-1).